The sequence spans 305 residues: Serine/threonine-protein phosphatase PP1-delta (305 aa).

Residues D62, H64, D90, and N122 each coordinate Mn(2+). Catalysis depends on H123, which acts as the Proton donor. Mn(2+) is bound by residues H172 and H247.

This sequence belongs to the PPP phosphatase family. In terms of tissue distribution, expressed in male germline including spermatocytes, spermatids and spermatozoa.

The protein resides in the chromosome. The protein localises to the cell projection. Its subcellular location is the pseudopodium. It is found in the cytoplasm. It catalyses the reaction O-phospho-L-seryl-[protein] + H2O = L-seryl-[protein] + phosphate. The enzyme catalyses O-phospho-L-threonyl-[protein] + H2O = L-threonyl-[protein] + phosphate. Its function is as follows. Probable phosphatase which plays a redundant role with gsp-4 in spermatogenesis by regulating sister chromatid segregation during meiosis. In addition, involved in sperm motility by controlling the dynamic disassembly of major sperm proteins (MSP) in the spermatozoan pseudopodium. This chain is Serine/threonine-protein phosphatase PP1-delta, found in Caenorhabditis elegans.